Reading from the N-terminus, the 231-residue chain is Adenylate kinase (231 aa).

12–17 (GAGKGT) lines the ATP pocket. Residues 32–61 (STGDMLRAAVKAKTPLGLEVKKIMESGGLV) form an NMP region. AMP-binding positions include Thr-33, Arg-38, 59–61 (GLV), 87–90 (GFPR), and Gln-94. An LID region spans residues 124 to 161 (GRLIHPASGRTYHRRYNPPKVADKDDVTGEPLIQRADD). ATP is bound by residues Arg-125 and 134–135 (TY). AMP-binding residues include Arg-158 and Arg-169. Gly-205 serves as a coordination point for ATP.

Belongs to the adenylate kinase family. As to quaternary structure, monomer.

The protein resides in the cytoplasm. It carries out the reaction AMP + ATP = 2 ADP. It functions in the pathway purine metabolism; AMP biosynthesis via salvage pathway; AMP from ADP: step 1/1. In terms of biological role, catalyzes the reversible transfer of the terminal phosphate group between ATP and AMP. Plays an important role in cellular energy homeostasis and in adenine nucleotide metabolism. In Coxiella burnetii (strain CbuK_Q154) (Coxiella burnetii (strain Q154)), this protein is Adenylate kinase.